Reading from the N-terminus, the 174-residue chain is ATP synthase subunit b 2 (174 aa).

A helical membrane pass occupies residues 27-47 (IFWLIITLVAIYLILTKVALP).

The protein belongs to the ATPase B chain family. As to quaternary structure, F-type ATPases have 2 components, F(1) - the catalytic core - and F(0) - the membrane proton channel. F(1) has five subunits: alpha(3), beta(3), gamma(1), delta(1), epsilon(1). F(0) has three main subunits: a(1), b(2) and c(10-14). The alpha and beta chains form an alternating ring which encloses part of the gamma chain. F(1) is attached to F(0) by a central stalk formed by the gamma and epsilon chains, while a peripheral stalk is formed by the delta and b chains.

It is found in the cell inner membrane. Its function is as follows. F(1)F(0) ATP synthase produces ATP from ADP in the presence of a proton or sodium gradient. F-type ATPases consist of two structural domains, F(1) containing the extramembraneous catalytic core and F(0) containing the membrane proton channel, linked together by a central stalk and a peripheral stalk. During catalysis, ATP synthesis in the catalytic domain of F(1) is coupled via a rotary mechanism of the central stalk subunits to proton translocation. Component of the F(0) channel, it forms part of the peripheral stalk, linking F(1) to F(0). The b'-subunit is a diverged and duplicated form of b found in plants and photosynthetic bacteria. This chain is ATP synthase subunit b 2 (atpF2), found in Dinoroseobacter shibae (strain DSM 16493 / NCIMB 14021 / DFL 12).